Consider the following 130-residue polypeptide: Large ribosomal subunit protein bL12 (130 aa).

This sequence belongs to the bacterial ribosomal protein bL12 family. As to quaternary structure, homodimer. Part of the ribosomal stalk of the 50S ribosomal subunit. Forms a multimeric L10(L12)X complex, where L10 forms an elongated spine to which 2 to 4 L12 dimers bind in a sequential fashion. Binds GTP-bound translation factors.

Forms part of the ribosomal stalk which helps the ribosome interact with GTP-bound translation factors. Is thus essential for accurate translation. This chain is Large ribosomal subunit protein bL12, found in Yersinia pestis bv. Antiqua (strain Angola).